Here is a 147-residue protein sequence, read N- to C-terminus: UPF0178 protein Nther_1836 (147 aa).

The protein belongs to the UPF0178 family.

The protein is UPF0178 protein Nther_1836 of Natranaerobius thermophilus (strain ATCC BAA-1301 / DSM 18059 / JW/NM-WN-LF).